A 500-amino-acid chain; its full sequence is GTPase Der (500 aa).

EngA-type G domains follow at residues 3–166 (PVVA…MEEL) and 211–384 (IKLA…VSAT). GTP is bound by residues 9–16 (GRPNVGKS), 56–60 (DTGGI), 118–121 (NKID), 217–224 (GRPNVGKS), 264–268 (DTAGV), and 329–332 (NKWD). The KH-like domain occupies 385-469 (KRVGTSVLTR…PIRIQFQNSE (85 aa)). Residues 468–500 (SENPFEDRGGKLTMSQERQRKRLLGAVKNRNKK) are disordered. Basic residues predominate over residues 486 to 500 (QRKRLLGAVKNRNKK).

Belongs to the TRAFAC class TrmE-Era-EngA-EngB-Septin-like GTPase superfamily. EngA (Der) GTPase family. Associates with the 50S ribosomal subunit.

Its function is as follows. GTPase that plays an essential role in the late steps of ribosome biogenesis. In Aliivibrio fischeri (strain ATCC 700601 / ES114) (Vibrio fischeri), this protein is GTPase Der.